We begin with the raw amino-acid sequence, 1927 residues long: Immunoglobulin A1 protease (1927 aa).

Positions 1 to 42 are cleaved as a signal peptide; sequence MEKYFGEKQERFSFRKLSVGLVSATISSLFFMSVLASSSVDA. Residues 43–99 constitute a propeptide that is removed on maturation; that stretch reads QETAGVHYKYVADSELSSEEKKQLVYDIPTYVENDDETYYLVYKLNSQNQLAELPNT. Positions 96-100 match the LPXTG sorting signal motif; it reads LPNTG. Position 99 is a pentaglycyl murein peptidoglycan amidated threonine (T99). 2 helical membrane-spanning segments follow: residues 106–125 and 132–154; these read QALVAGASLAALGILIFAVS and KTVLHLVLVAGIGNGVLVSVHAL. Residues 155–1927 lie on the Extracellular side of the membrane; the sequence is ENHLLLNYNT…FRRSIFENKK (1773 aa). The segment covering 235–246 has biased composition (polar residues); sequence QEQTPVSSTKPT. Disordered stretches follow at residues 235–305, 371–394, and 426–640; these read QEQT…NPQD, SREIVSTSTTAPSPRIVEKGTKKT, and EAVV…PEKT. Residues 276 to 296 are compositionally biased toward basic and acidic residues; it reads LAEHKNLETKKEEKISPKEKT. A G5 domain is found at 314 to 393; it reads KPELLYREET…PRIVEKGTKK (80 aa). 3 consecutive repeat copies span residues 419–435, 436–452, and 453–469. Positions 419–469 are 3 X 17 AA approximate tandem repeats; that stretch reads AIQPELPEAVVSDKGEPEVQPTLPEAVVTDKGEPAVQPELPEAVVSDKGEP. The span at 485–511 shows a compositional bias: basic and acidic residues; sequence VKPETPVEKTKEQGPEKTEEVPVKPTE. Composition is skewed to polar residues over residues 516 to 529, 538 to 559, and 568 to 606; these read NPNEGTTEGTSIQG, EDTQTNSGKIANENTGEVSNKP, and ESNQPEKNGTATKPENSGNTTSENGQTEPEPSNGNSTED. Low complexity predominate over residues 609-619; that stretch reads TKSNTSNSNGN. Residues 620–640 show a composition bias toward basic and acidic residues; that stretch reads EEIKQENELDPDKKVEDPEKT. Residue H1565 participates in Zn(2+) binding. The active site involves E1566. Zn(2+) is bound by residues H1569 and E1589.

The protein belongs to the peptidase M26 family. Zn(2+) is required as a cofactor. Post-translationally, the Gram-positive cell-wall anchor motif LPXTG is located in the N-terminal part, in contrast to such motifs in other known streptococcal and staphylococcal proteins. The protease could be cleaved by the sortase and anchored in the membrane via the two potential N-terminal transmembrane domains, whereas the propeptide located prior to the LPXTG motif would remain attached to the cell wall peptidoglycan by an amide bond.

It localises to the secreted. The protein resides in the cell wall. The protein localises to the membrane. It carries out the reaction Cleavage of Pro-|-Thr bond in the hinge region of the heavy chain of human IgA.. In terms of biological role, zinc metalloproteinase which cleaves human immunoglobulin A1 (IgA1) in the hinge region, rendering it less efficient in coating the surface of colonizing or invading pneumococci. May be responsible for pneumococcal infection and is potentially involved in distinct stages of pneumococcal disease. This Streptococcus pneumoniae protein is Immunoglobulin A1 protease (iga).